A 638-amino-acid polypeptide reads, in one-letter code: Adhesion G-protein coupled receptor F2 (638 aa).

The N-terminal stretch at M1–A25 is a signal peptide. At A26–Y386 the chain is on the extracellular side. N155, N219, N248, N293, and N311 each carry an N-linked (GlcNAc...) asparagine glycan. Residues P233–E377 enclose the GAIN-B domain. 2 disulfides stabilise this stretch: C329–C356 and C344–C358. A GPS region spans residues C329–E377. Residues I387–W407 traverse the membrane as a helical segment. The Cytoplasmic portion of the chain corresponds to S408–C422. A helical transmembrane segment spans residues I423–L443. Residues S444–L465 lie on the Extracellular side of the membrane. A helical transmembrane segment spans residues S466–F486. At H487 to C493 the chain is on the cytoplasmic side. Residues L494–L514 traverse the membrane as a helical segment. Topologically, residues A515 to A541 are extracellular. A helical membrane pass occupies residues F542 to I562. The Cytoplasmic segment spans residues K563–N586. The helical transmembrane segment at I587–A607 threads the bilayer. Residues G608–S610 lie on the Extracellular side of the membrane. Residues L611–I631 form a helical membrane-spanning segment. Residues E632–C638 lie on the Cytoplasmic side of the membrane.

This sequence belongs to the G-protein coupled receptor 2 family. Adhesion G-protein coupled receptor (ADGR) subfamily.

The protein resides in the membrane. Its function is as follows. Orphan receptor. The chain is Adhesion G-protein coupled receptor F2 (Adgrf2) from Rattus norvegicus (Rat).